The chain runs to 784 residues: Lon protease (784 aa).

One can recognise a Lon N-terminal domain in the interval 11-204; the sequence is IPVLPLRDVV…YLMAMMESEI (194 aa). 356–363 contributes to the ATP binding site; that stretch reads GPPGVGKT. The Lon proteolytic domain occupies 592 to 773; that stretch reads ENRVGQVTGL…EEVLTLALQN (182 aa). Active-site residues include Ser-679 and Lys-722.

This sequence belongs to the peptidase S16 family. Homohexamer. Organized in a ring with a central cavity. ATP binding and hydrolysis do not affect the oligomeric state of the enzyme.

The protein resides in the cytoplasm. It catalyses the reaction Hydrolysis of proteins in presence of ATP.. Its activity is regulated as follows. Contains an allosteric site (distinct from its active site), whose occupancy by an unfolded polypeptide leads to enzyme activation. Its function is as follows. ATP-dependent serine protease that mediates the selective degradation of mutant and abnormal proteins as well as certain short-lived regulatory proteins. Required for cellular homeostasis and for survival from DNA damage and developmental changes induced by stress. Degrades polypeptides processively to yield small peptide fragments that are 5 to 10 amino acids long. Binds to DNA in a double-stranded, site-specific manner. Endogenous substrates include the regulatory proteins RcsA and SulA, the transcriptional activator SoxS, and UmuD. Its overproduction specifically inhibits translation through at least two different pathways, one of them being the YoeB-YefM toxin-antitoxin system. This is Lon protease from Escherichia coli O6:H1 (strain CFT073 / ATCC 700928 / UPEC).